The chain runs to 169 residues: Putative phosphoesterase SSP1770 (169 aa).

Histidine 34 serves as the catalytic Proton donor. 2 short sequence motifs (HXTX) span residues histidine 34–isoleucine 37 and histidine 115–isoleucine 118. Histidine 115 functions as the Proton acceptor in the catalytic mechanism.

This sequence belongs to the 2H phosphoesterase superfamily. YjcG family.

This chain is Putative phosphoesterase SSP1770, found in Staphylococcus saprophyticus subsp. saprophyticus (strain ATCC 15305 / DSM 20229 / NCIMB 8711 / NCTC 7292 / S-41).